A 146-amino-acid polypeptide reads, in one-letter code: Extracellular globin-2A (146 aa).

Positions 4-146 (HCGPLQRLKV…EVIYPGIKHD (143 aa)) constitute a Globin domain. Residues Cys-5 and Cys-134 are joined by a disulfide bond. A heme b-binding site is contributed by His-97.

It belongs to the globin family. In terms of assembly, disulfide bonded trimer of chains IIA, IIB, and IIC.

This chain is Extracellular globin-2A, found in Tylorrhynchus heterochetus (Japanese palolo worm).